Here is a 158-residue protein sequence, read N- to C-terminus: uncharacterized protein (158 aa).

This is an uncharacterized protein from Mycoplasma pneumoniae (strain ATCC 29342 / M129 / Subtype 1) (Mycoplasmoides pneumoniae).